Consider the following 324-residue polypeptide: 4-diphosphocytidyl-2-C-methyl-D-erythritol kinase (324 aa).

Lys11 is an active-site residue. 108–118 (PIGAGLAGGST) contacts ATP. Residue Asp150 is part of the active site.

Belongs to the GHMP kinase family. IspE subfamily.

The catalysed reaction is 4-CDP-2-C-methyl-D-erythritol + ATP = 4-CDP-2-C-methyl-D-erythritol 2-phosphate + ADP + H(+). It participates in isoprenoid biosynthesis; isopentenyl diphosphate biosynthesis via DXP pathway; isopentenyl diphosphate from 1-deoxy-D-xylulose 5-phosphate: step 3/6. Functionally, catalyzes the phosphorylation of the position 2 hydroxy group of 4-diphosphocytidyl-2C-methyl-D-erythritol. The polypeptide is 4-diphosphocytidyl-2-C-methyl-D-erythritol kinase (Cyanothece sp. (strain PCC 7425 / ATCC 29141)).